Consider the following 542-residue polypeptide: Hydroxylamine reductase (542 aa).

C5, C8, C17, and C23 together coordinate [4Fe-4S] cluster. Hybrid [4Fe-2O-2S] cluster contacts are provided by H237, E261, C305, C397, C425, C450, E485, and K487. Residue C397 is modified to Cysteine persulfide.

This sequence belongs to the HCP family. [4Fe-4S] cluster serves as cofactor. The cofactor is hybrid [4Fe-2O-2S] cluster.

Its subcellular location is the cytoplasm. The catalysed reaction is A + NH4(+) + H2O = hydroxylamine + AH2 + H(+). In terms of biological role, catalyzes the reduction of hydroxylamine to form NH(3) and H(2)O. The chain is Hydroxylamine reductase from Acetivibrio thermocellus (strain ATCC 27405 / DSM 1237 / JCM 9322 / NBRC 103400 / NCIMB 10682 / NRRL B-4536 / VPI 7372) (Clostridium thermocellum).